The sequence spans 919 residues: GPI ethanolamine phosphate transferase 1 (919 aa).

The Cytoplasmic portion of the chain corresponds to 1 to 9 (MWNKTRTTL). The helical transmembrane segment at 10-30 (LAVGVLFHLFYLWSIFDIYFI) threads the bilayer. The Lumenal segment spans residues 31–457 (SPLVHGMSPY…TTYNWRFIRT (427 aa)). Residues asparagine 90, asparagine 138, asparagine 198, asparagine 202, asparagine 286, and asparagine 312 are each glycosylated (N-linked (GlcNAc...) asparagine). Residues 458–478 (IVTFGFVGWIFFSFIIFLKSF) form a helical membrane-spanning segment. At 479 to 488 (ILENVIDDQK) the chain is on the cytoplasmic side. Residues 489 to 509 (ASPLSHAVFGSIGILLNWILF) traverse the membrane as a helical segment. Residues 510–512 (YQH) are Lumenal-facing. The helical transmembrane segment at 513-533 (SPFNFYMYLLFPLYFWSYIFT) threads the bilayer. Topologically, residues 534 to 553 (NRSVLRSGIKEFFKGTSPWK) are cytoplasmic. A helical transmembrane segment spans residues 554–574 (RVLITISIISVYEGIVYGFFH). The Lumenal portion of the chain corresponds to 575 to 576 (RW). Residues 577–597 (TFTLITNILAFYPFICGVREL) traverse the membrane as a helical segment. Position 598 (serine 598) is a topological domain, cytoplasmic. The helical transmembrane segment at 599 to 619 (VNILWIITSVLLSTFTLFDAV) threads the bilayer. At 620-626 (KIEDLNQ) the chain is on the lumenal side. Residues 627–647 (IHLAGLLIILSAFYALYKIHS) traverse the membrane as a helical segment. Topologically, residues 648–655 (RINSYTRA) are cytoplasmic. The helical transmembrane segment at 656 to 676 (IFAIQISLVAAMLAVTHRSVI) threads the bilayer. Topologically, residues 677-687 (SLQLRQGLPRE) are lumenal. The helical transmembrane segment at 688-708 (SQVAGWIIFFVSLFVMPILHY) threads the bilayer. The Cytoplasmic portion of the chain corresponds to 709–720 (RKPNNDYKVRLL). Residues 721 to 741 (IIYLTFAPSFIILTISFESLF) traverse the membrane as a helical segment. Topologically, residues 742–776 (YFLFTSYMVQWIEIENKIKEMKTQKDENWLQVLRV) are lumenal. Residues 777–797 (SVIGFFLLQVAFFGTGNVASI) form a helical membrane-spanning segment. The Cytoplasmic portion of the chain corresponds to 798-807 (SSFSLESVCR). Residues 808–828 (LLPIFDPFLMGALLMLKLIIP) traverse the membrane as a helical segment. Topologically, residues 829 to 848 (YGLLSTCLGILNLKLNFKDY) are lumenal. The helical transmembrane segment at 849–869 (TISSLIISMSDILSLNFFYLL) threads the bilayer. At 870–885 (RTEGSWLDIGITISNY) the chain is on the cytoplasmic side. Residues 886–906 (CLAILSSLFMLILEVLGHVLL) traverse the membrane as a helical segment. The Lumenal segment spans residues 907–919 (KNVIIQDKTKKTQ).

The protein belongs to the PIGG/PIGN/PIGO family. PIGN subfamily. In terms of assembly, interacts with CSF1; CSF1 channels phosphatidylethanolamine to MCD4 in the endoplasmic reticulum at contact sites to support GPI anchor biosynthesis. In terms of processing, N-glycosylated.

It is found in the endoplasmic reticulum membrane. Its subcellular location is the golgi apparatus membrane. The protein localises to the vacuole membrane. It participates in glycolipid biosynthesis; glycosylphosphatidylinositol-anchor biosynthesis. Functionally, ethanolamine phosphate transferase involved in glycosylphosphatidylinositol-anchor biosynthesis. Transfers ethanolamine phosphate to the first alpha-1,4-linked mannose of the glycosylphosphatidylinositol precursor of GPI-anchor. Ethanolamine phosphate on the alpha-1,4-linked mannose is essential for further mannosylation by GPI10 and is necessary for an efficient recognition of GPI lipids and GPI proteins by the GPI transamidase, for the efficient transport of GPI anchored proteins from endoplasmic reticulum to Golgi and for the physiological incorporation of ceramides into GPI anchors by lipid remodeling. Also involved in non-mitochondrial ATP movements across membrane and participates in Golgi and endoplasmic reticulum function, Also required for the incorporation of BGL2 into the cell wall. This Saccharomyces cerevisiae (strain ATCC 204508 / S288c) (Baker's yeast) protein is GPI ethanolamine phosphate transferase 1 (MCD4).